The sequence spans 459 residues: Elongation factor 1-alpha (459 aa).

N,N,N-trimethylglycine is present on glycine 2. Lysine 3 is modified (N6,N6-dimethyllysine; alternate). N6-methyllysine; alternate is present on lysine 3. Residues 5–239 form the tr-type G domain; it reads KSHINVVVIG…DAIDPPSRPT (235 aa). The interval 14 to 21 is G1; that stretch reads GHVDSGKS. 14–21 serves as a coordination point for GTP; sequence GHVDSGKS. Lysine 30 is subject to N6-methyllysine. The tract at residues 70–74 is G2; the sequence is GITID. At lysine 79 the chain carries N6,N6,N6-trimethyllysine. Residues 91–94 form a G3 region; that stretch reads DAPG. Residues 91–95 and 153–156 contribute to the GTP site; these read DAPGH and NKMD. The G4 stretch occupies residues 153–156; the sequence is NKMD. The segment at 192-194 is G5; that stretch reads SGF. Lysine 315 bears the N6,N6-dimethyllysine; alternate mark. Lysine 315 is subject to N6-methyllysine; alternate. At lysine 389 the chain carries N6-methyllysine.

It belongs to the TRAFAC class translation factor GTPase superfamily. Classic translation factor GTPase family. EF-Tu/EF-1A subfamily.

It is found in the cytoplasm. In terms of biological role, this protein promotes the GTP-dependent binding of aminoacyl-tRNA to the A-site of ribosomes during protein biosynthesis. The protein is Elongation factor 1-alpha (TEF1) of Aureobasidium pullulans (Black yeast).